The following is a 201-amino-acid chain: Transcription factor MYB82 (201 aa).

2 consecutive HTH myb-type domains span residues 9–61 (KSYV…KNYL) and 62–116 (RPNI…NKKP). 2 consecutive DNA-binding regions (H-T-H motif) follow at residues 37–61 (WADI…KNYL) and 89–112 (WSLI…NTHL). The tract at residues 112–133 (LNKKPNSRRQNAPESIVGATPF) is disordered.

Homodimer and heterodimer with GL1. Part of the WD40-bHLH-MYB complex. Interacts with BHLH012/MYC1 and BHLH042/TT8. Interacts (via N-terminus) with GL1 and GL3. In terms of tissue distribution, mainly expressed in the trichomes of new leaves.

Its subcellular location is the nucleus. Functionally, transcription activation factor positively regulating trichomes development. Has a function nearly equivalent to that of GL1 and can complement gl1 mutants. The chain is Transcription factor MYB82 (MYB82) from Arabidopsis thaliana (Mouse-ear cress).